We begin with the raw amino-acid sequence, 89 residues long: Large ribosomal subunit protein bL27 (89 aa).

The protein belongs to the bacterial ribosomal protein bL27 family.

In Bacteroides thetaiotaomicron (strain ATCC 29148 / DSM 2079 / JCM 5827 / CCUG 10774 / NCTC 10582 / VPI-5482 / E50), this protein is Large ribosomal subunit protein bL27.